A 76-amino-acid chain; its full sequence is Acyl carrier protein (76 aa).

The Carrier domain occupies 1–76; the sequence is MSVEEKVKKI…DAIDYIAGKQ (76 aa). An O-(pantetheine 4'-phosphoryl)serine modification is found at Ser36.

It belongs to the acyl carrier protein (ACP) family. In terms of processing, 4'-phosphopantetheine is transferred from CoA to a specific serine of apo-ACP by AcpS. This modification is essential for activity because fatty acids are bound in thioester linkage to the sulfhydryl of the prosthetic group.

The protein resides in the cytoplasm. It participates in lipid metabolism; fatty acid biosynthesis. Functionally, carrier of the growing fatty acid chain in fatty acid biosynthesis. The polypeptide is Acyl carrier protein (Oleidesulfovibrio alaskensis (strain ATCC BAA-1058 / DSM 17464 / G20) (Desulfovibrio alaskensis)).